The following is a 95-amino-acid chain: Co-chaperonin GroES (95 aa).

Belongs to the GroES chaperonin family. Heptamer of 7 subunits arranged in a ring. Interacts with the chaperonin GroEL.

It localises to the cytoplasm. Together with the chaperonin GroEL, plays an essential role in assisting protein folding. The GroEL-GroES system forms a nano-cage that allows encapsulation of the non-native substrate proteins and provides a physical environment optimized to promote and accelerate protein folding. GroES binds to the apical surface of the GroEL ring, thereby capping the opening of the GroEL channel. The polypeptide is Co-chaperonin GroES (Vesicomyosocius okutanii subsp. Calyptogena okutanii (strain HA)).